A 360-amino-acid polypeptide reads, in one-letter code: 3-dehydroquinate synthase (360 aa).

Residues D71–K76, G105–D109, T129–T130, K142, K151, and T169–T172 each bind NAD(+). Zn(2+) contacts are provided by E184, H248, and H265.

Belongs to the sugar phosphate cyclases superfamily. Dehydroquinate synthase family. Requires Co(2+) as cofactor. It depends on Zn(2+) as a cofactor. NAD(+) serves as cofactor.

Its subcellular location is the cytoplasm. The catalysed reaction is 7-phospho-2-dehydro-3-deoxy-D-arabino-heptonate = 3-dehydroquinate + phosphate. Its pathway is metabolic intermediate biosynthesis; chorismate biosynthesis; chorismate from D-erythrose 4-phosphate and phosphoenolpyruvate: step 2/7. In terms of biological role, catalyzes the conversion of 3-deoxy-D-arabino-heptulosonate 7-phosphate (DAHP) to dehydroquinate (DHQ). The polypeptide is 3-dehydroquinate synthase (Coxiella burnetii (strain CbuG_Q212) (Coxiella burnetii (strain Q212))).